The chain runs to 155 residues: Putative pre-16S rRNA nuclease (155 aa).

This sequence belongs to the YqgF nuclease family.

It is found in the cytoplasm. Could be a nuclease involved in processing of the 5'-end of pre-16S rRNA. This Xylella fastidiosa (strain M12) protein is Putative pre-16S rRNA nuclease.